Consider the following 699-residue polypeptide: Receptor-type tyrosine-protein phosphatase epsilon (699 aa).

An N-terminal signal peptide occupies residues 1 to 19 (MEPFCPLLLASFSLSLARA). Residues 20-36 (GQGNDTTPTESNWTSTT) show a composition bias toward low complexity. The tract at residues 20–40 (GQGNDTTPTESNWTSTTAGPP) is disordered. Residues 20 to 45 (GQGNDTTPTESNWTSTTAGPPDPGAS) are Extracellular-facing. N-linked (GlcNAc...) asparagine glycans are attached at residues Asn23 and Asn31. A helical membrane pass occupies residues 46–68 (QPLLTWLLLPLLLLLFLLAAYFF). At 69 to 699 (RFRKQRKAVV…DIFSDYANFK (631 aa)) the chain is on the cytoplasmic side. Tyrosine-protein phosphatase domains are found at residues 134–393 (FREE…LLEY) and 425–688 (LEEE…VQDF). Substrate contacts are provided by residues Asp302, 334 to 340 (CSAGVGR), and Gln378. Residue Cys334 is the Phosphocysteine intermediate of the active site. Cys629 functions as the Phosphocysteine intermediate in the catalytic mechanism. Position 695 is a phosphotyrosine (Tyr695).

Belongs to the protein-tyrosine phosphatase family. Receptor class 4 subfamily. Monomer. Isoform 2: Homodimer. Can form oligomers. Dimerization is increased by oxidative stress and decreased by EGFR. Isoform 2 interacts with GRB2. Post-translationally, a catalytically active cytoplasmic form (p65) is produced by proteolytic cleavage of either isoform 1, isoform 2 or isoform 3. In terms of processing, phosphorylated on tyrosine residues by tyrosine kinase Neu. Glycosylated. Isoform 2 is expressed in the spleen and thymus (at protein level). Detected in fibroblasts, myeloid cells, macrophages, and T-cells but not in B-cell lines. Isoform 1 and isoform 2 are expressed predominantly in the brain, testes, and lungs, with lower levels present in lymph nodes, thymus, spleen, heart and mammary glands. Isoform 1 is expressed in osteoclasts and not in osteoblasts and its expression is related to osteoclast differentiation. It is also expressed in the erythrocytes. Isoform 2 is strongly expressed in skeletal muscle and L6 skeletal muscle cell line.

It is found in the cell membrane. It localises to the cytoplasm. It catalyses the reaction O-phospho-L-tyrosyl-[protein] + H2O = L-tyrosyl-[protein] + phosphate. Its activity is regulated as follows. Inhibited by alendronate (ALN), orthovanadate, and phenylarsine oxide (PAO). Its function is as follows. Acts as a negative regulator of insulin receptor (IR) signaling and is involved in insulin-induced glucose metabolism mainly through direct dephosphorylation and inactivation of IR in hepatocytes and liver. Plays a critical role in signaling transduction pathways and phosphoprotein network topology in red blood cells. May play a role in osteoclast formation and function. Acts as a negative regulator of insulin receptor (IR) signaling in skeletal muscle. Regulates insulin-induced tyrosine phosphorylation of insulin receptor (IR) and insulin receptor substrate 1 (IRS-1), phosphorylation of protein kinase B and glycogen synthase kinase-3 and insulin induced stimulation of glucose uptake. In terms of biological role, isoform 1 and isoform 2 act as a negative regulator of FceRI-mediated signal transduction leading to cytokine production and degranulation, most likely by acting at the level of SYK to affect downstream events such as phosphorylation of SLP76 and LAT and mobilization of Ca(2+). In Mus musculus (Mouse), this protein is Receptor-type tyrosine-protein phosphatase epsilon (Ptpre).